Reading from the N-terminus, the 482-residue chain is Islet cell autoantigen 1-like protein (482 aa).

Positions 44-247 (ASDAELDAKL…TARMMSQIHE (204 aa)) constitute an AH domain. 2 disordered regions span residues 365–393 (TQEC…PLAH) and 427–449 (SHTD…PNNG). Composition is skewed to polar residues over residues 366–385 (QECQ…QEPS) and 428–449 (HTDN…PNNG).

The chain is Islet cell autoantigen 1-like protein (ICA1L) from Homo sapiens (Human).